Here is a 267-residue protein sequence, read N- to C-terminus: Small ribosomal subunit protein uS2 (267 aa).

The interval 247–267 is disordered; sequence LEDDILEDVEDEEEGDPEQGE.

It belongs to the universal ribosomal protein uS2 family.

In Synechococcus sp. (strain JA-3-3Ab) (Cyanobacteria bacterium Yellowstone A-Prime), this protein is Small ribosomal subunit protein uS2.